The following is a 399-amino-acid chain: tRNA-dihydrouridine(16/17) synthase [NAD(P)(+)] (399 aa).

FMN contacts are provided by residues 24–26 (PMV) and glutamine 80. Residue cysteine 109 is the Proton donor of the active site. FMN contacts are provided by residues lysine 148, histidine 176, 211–213 (NGN), and 235–236 (AE).

The protein belongs to the Dus family. Dus1 subfamily. Requires FMN as cofactor.

The protein localises to the nucleus. Its subcellular location is the mitochondrion. The enzyme catalyses 5,6-dihydrouridine(16) in tRNA + NADP(+) = uridine(16) in tRNA + NADPH + H(+). The catalysed reaction is 5,6-dihydrouridine(16) in tRNA + NAD(+) = uridine(16) in tRNA + NADH + H(+). It carries out the reaction 5,6-dihydrouridine(17) in tRNA + NAD(+) = uridine(17) in tRNA + NADH + H(+). It catalyses the reaction 5,6-dihydrouridine(17) in tRNA + NADP(+) = uridine(17) in tRNA + NADPH + H(+). The enzyme catalyses a 5,6-dihydrouridine in mRNA + NAD(+) = a uridine in mRNA + NADH + H(+). The catalysed reaction is a 5,6-dihydrouridine in mRNA + NADP(+) = a uridine in mRNA + NADPH + H(+). In terms of biological role, catalyzes the synthesis of dihydrouridine, a modified base found in the D-loop of most tRNAs. Also able to mediate dihydrouridylation of some mRNAs, thereby affecting their translation. This chain is tRNA-dihydrouridine(16/17) synthase [NAD(P)(+)], found in Schizosaccharomyces pombe (strain 972 / ATCC 24843) (Fission yeast).